The chain runs to 93 residues: Small ribosomal subunit protein uS19m (93 aa).

This sequence belongs to the universal ribosomal protein uS19 family.

It is found in the mitochondrion. The chain is Small ribosomal subunit protein uS19m (RPS19) from Marchantia polymorpha (Common liverwort).